The primary structure comprises 494 residues: UDP-N-acetylmuramoyl-L-alanyl-D-glutamate--L-lysine ligase (494 aa).

Serine 30 contributes to the UDP-N-acetyl-alpha-D-muramoyl-L-alanyl-D-glutamate binding site. 110-116 contributes to the ATP binding site; sequence GTNGKTS. Residues 152-153, serine 179, and arginine 187 each bind UDP-N-acetyl-alpha-D-muramoyl-L-alanyl-D-glutamate; that span reads TT. Residue lysine 219 is modified to N6-carboxylysine. The L-lysine recognition motif signature appears at 406-409; sequence DNPA.

The protein belongs to the MurCDEF family. MurE subfamily. Carboxylation is probably crucial for Mg(2+) binding and, consequently, for the gamma-phosphate positioning of ATP.

The protein resides in the cytoplasm. The enzyme catalyses UDP-N-acetyl-alpha-D-muramoyl-L-alanyl-D-glutamate + L-lysine + ATP = UDP-N-acetyl-alpha-D-muramoyl-L-alanyl-gamma-D-glutamyl-L-lysine + ADP + phosphate + H(+). It participates in cell wall biogenesis; peptidoglycan biosynthesis. Its function is as follows. Catalyzes the addition of L-lysine to the nucleotide precursor UDP-N-acetylmuramoyl-L-alanyl-D-glutamate (UMAG) in the biosynthesis of bacterial cell-wall peptidoglycan. This chain is UDP-N-acetylmuramoyl-L-alanyl-D-glutamate--L-lysine ligase, found in Staphylococcus aureus (strain MW2).